The following is a 446-amino-acid chain: Tripartite motif-containing protein 43C (446 aa).

The RING-type zinc-finger motif lies at 16–57 (CSICQGIFMDPVYLRCGHKFCETCLLLFQEDIKFPAYCPTCR). The B box-type zinc finger occupies 88-129 (SEEHKCVTHKAKKMIFCDKSKILLCHLCSDSQEHSGHTHCSI). Cys-93, His-96, Cys-115, and His-121 together coordinate Zn(2+). The B30.2/SPRY domain maps to 271–446 (RLRAHSIPGL…VRPFFFAAYT (176 aa)).

It belongs to the TRIM/RBCC family.

In Mus musculus (Mouse), this protein is Tripartite motif-containing protein 43C.